The following is a 55-amino-acid chain: Histone H1 (55 aa).

The span at 1–15 (MAEVAPAPAAAAPAK) shows a compositional bias: low complexity. Residues 1-28 (MAEVAPAPAAAAPAKAPKKKAAAKPKKA) form a disordered region. Ala2 carries the post-translational modification N-acetylalanine. Positions 16-27 (APKKKAAAKPKK) are enriched in basic residues. The 28-residue stretch at 28–55 (AGPSVGELIVKAVSASKERSGVSLAALK) folds into the H15 domain.

The protein belongs to the histone H1/H5 family.

It is found in the nucleus. The protein resides in the chromosome. The protein localises to the secreted. Functionally, histones H1 are necessary for the condensation of nucleosome chains into higher-order structures. In terms of biological role, SAMP H1 has antibacterial activity against Gram-negative bacteria E.coli, A.salmonicida subsp salmonicida, V.anguillarum and S.typhimurium and Gram-positive bacteria B.subtilis and L.ivanovii. The polypeptide is Histone H1 (Salmo salar (Atlantic salmon)).